The primary structure comprises 298 residues: MGQNGALQPIQLVIITGMSGAGKTVAIQSFEDLGFFCIDNLPPTLLPKFLELVKESGNKMNKVALVMDLRSRDFFDHLFAALDELAEQAWVIPQVLFLDAQDSTLVARYKETRRTHPLAPNEPPLEGIRLERKLLEELKGRAQIIYDTTGLKPRELREKIIRQFSSHAQSGFTINVMSFGFKYGIPIDADLVFDVRFLPNPHYIEHMRPKTGLDDDVSSYVLKWGETQKFLEKLIDLLSFMLPYYQREGKSQLVIAIGCTGGQHRSVALAEYIARHFSDDYKTVVSHRDMERRKDIHR.

17–24 serves as a coordination point for ATP; that stretch reads GMSGAGKT. 68 to 71 is a GTP binding site; it reads DLRS.

The protein belongs to the RapZ-like family.

Functionally, displays ATPase and GTPase activities. This chain is Nucleotide-binding protein GK3066, found in Geobacillus kaustophilus (strain HTA426).